The following is a 387-amino-acid chain: Exodeoxyribonuclease 7 large subunit (387 aa).

This sequence belongs to the XseA family. In terms of assembly, heterooligomer composed of large and small subunits.

The protein localises to the cytoplasm. It carries out the reaction Exonucleolytic cleavage in either 5'- to 3'- or 3'- to 5'-direction to yield nucleoside 5'-phosphates.. Its function is as follows. Bidirectionally degrades single-stranded DNA into large acid-insoluble oligonucleotides, which are then degraded further into small acid-soluble oligonucleotides. The polypeptide is Exodeoxyribonuclease 7 large subunit (Campylobacter jejuni subsp. jejuni serotype O:23/36 (strain 81-176)).